A 346-amino-acid chain; its full sequence is Small ribosomal subunit biogenesis GTPase RsgA (346 aa).

The tract at residues 1–26 (MAKRKLTQNQTRRIQSNNAKTLHRHK) is disordered. The segment covering 7 to 20 (TQNQTRRIQSNNAK) has biased composition (polar residues). Positions 103 to 271 (ENEISRPDYY…LIDSPGIREF (169 aa)) constitute a CP-type G domain. Residues 159–162 (NKVD) and 213–221 (GQSGVGKSS) each bind GTP. Zn(2+)-binding residues include C295, C300, H302, and C308.

It belongs to the TRAFAC class YlqF/YawG GTPase family. RsgA subfamily. In terms of assembly, monomer. Associates with 30S ribosomal subunit, binds 16S rRNA. Requires Zn(2+) as cofactor.

It localises to the cytoplasm. Functionally, one of several proteins that assist in the late maturation steps of the functional core of the 30S ribosomal subunit. Helps release RbfA from mature subunits. May play a role in the assembly of ribosomal proteins into the subunit. Circularly permuted GTPase that catalyzes slow GTP hydrolysis, GTPase activity is stimulated by the 30S ribosomal subunit. The chain is Small ribosomal subunit biogenesis GTPase RsgA from Haemophilus influenzae (strain PittEE).